The primary structure comprises 626 residues: Miltiradiene synthase KSL1, chloroplastic (626 aa).

The transit peptide at 1-51 (MSLAFNLRVIPFSGHTIQSRRGLFPVHESPMITTKPFAAVKCSLTTSTDLM) directs the protein to the chloroplast. Asp329, Asp333, Asn473, and Glu481 together coordinate Mg(2+). The short motif at 329–333 (DDFFD) is the DDXXD motif element.

Belongs to the terpene synthase family. Mg(2+) serves as cofactor. In terms of tissue distribution, highly expressed in roots, and, at low levels, in stems and leaves.

It is found in the plastid. The protein localises to the chloroplast. It catalyses the reaction (+)-copalyl diphosphate = miltiradiene + diphosphate. It functions in the pathway secondary metabolite biosynthesis; terpenoid biosynthesis. Involved in the biosynthesis of ent-kaurene diterpenoids natural products such as oridonin, miltiradiene, eriocalyxin B and nezukol, known to exhibit antitumor, anti-inflammatory and antibacterial activities. Catalyzes the conversion of (+)-copalyl diphosphate ((+)-CPP) to miltiradiene. The polypeptide is Miltiradiene synthase KSL1, chloroplastic (Isodon rubescens (Rabdosia rubescens)).